The primary structure comprises 1074 residues: DNA helicase B (1074 aa).

Disordered stretches follow at residues 1-38 (MARQ…EEEF), 380-420 (GAKP…HVRS), and 932-1014 (GSCA…FDEE). Residues 20 to 38 (DDEEEDCAQEEEGEQEEEF) are compositionally biased toward acidic residues. The segment covering 934–946 (CAPSTGFASQPSS) has biased composition (polar residues). Phosphoserine is present on residues serine 942 and serine 946. A Phosphothreonine modification is found at threonine 992. Phosphoserine is present on residues serine 1015 and serine 1026. The Nuclear export signal motif lies at 1022–1046 (VEAPSPQVSSVFQNMRLNTLTPRQL). The tract at residues 1040-1074 (TLTPRQLFKPTDNQDTGTAGVADDANDPSNQEMEM) is disordered.

Belongs to the RecD family. HELB subfamily. Binds to RPA1; this interaction promotes HELB recruitment to chromatin following DNA damage. Interacts with at least two subunits of the DNA polymerase alpha complex. Interacts with CDC45. Interacts with TOPB1. Post-translationally, phosphorylated at Ser-942 by CDK2 during the G1/S transition, resulting in its nuclear export into the cytoplasm. As S phase progresses, its exclusion from the nucleus promotes the activation of long-range resection.

The protein localises to the nucleus. Its subcellular location is the cytoplasm. The protein resides in the chromosome. It catalyses the reaction ATP + H2O = ADP + phosphate + H(+). 5'-3' DNA helicase involved in DNA damage response by acting as an inhibitor of DNA end resection. Recruitment to single-stranded DNA (ssDNA) following DNA damage leads to inhibit the nucleases catalyzing resection, such as EXO1, BLM and DNA2, possibly via the 5'-3' ssDNA translocase activity of HELB. As cells approach S phase, DNA end resection is promoted by the nuclear export of HELB following phosphorylation. Acts independently of TP53BP1. Unwinds duplex DNA with 5'-3' polarity. Has single-strand DNA-dependent ATPase and DNA helicase activities. Prefers ATP and dATP as substrates. During S phase, may facilitate cellular recovery from replication stress. In Mus musculus (Mouse), this protein is DNA helicase B.